The primary structure comprises 396 residues: Tryptophan synthase beta chain (396 aa).

The residue at position 86 (lysine 86) is an N6-(pyridoxal phosphate)lysine.

It belongs to the TrpB family. As to quaternary structure, tetramer of two alpha and two beta chains. Pyridoxal 5'-phosphate serves as cofactor.

It catalyses the reaction (1S,2R)-1-C-(indol-3-yl)glycerol 3-phosphate + L-serine = D-glyceraldehyde 3-phosphate + L-tryptophan + H2O. It participates in amino-acid biosynthesis; L-tryptophan biosynthesis; L-tryptophan from chorismate: step 5/5. Its function is as follows. The beta subunit is responsible for the synthesis of L-tryptophan from indole and L-serine. This Yersinia enterocolitica serotype O:8 / biotype 1B (strain NCTC 13174 / 8081) protein is Tryptophan synthase beta chain.